Reading from the N-terminus, the 278-residue chain is Manganese import system permease protein ScaB (278 aa).

8 helical membrane-spanning segments follow: residues 18-38 (ALITAIVIGVVAGAVGCFIIL), 61-81 (ILGINFFIGAITFGLLASIII), 94-114 (TAIGITFSSFLALGIILISVA), 134-154 (LDMWISIGVGILVLLVISIFF), 174-194 (VNFYHYLLMILLTLVSVTAMQ), 196-216 (VGTILIVAMLITPAATAYLYA), 222-242 (MILLSSALGAGASVLGLFIGY), and 246-266 (VAAGSSIVLTSALIFLVSFFI).

Belongs to the ABC-3 integral membrane protein family. As to quaternary structure, the complex is composed of two ATP-binding proteins (ScaC), two transmembrane proteins (ScaB) and a solute-binding protein (ScaA).

It localises to the cell membrane. In terms of biological role, part of the high-affinity ABC transporter complex ScaABC involved in manganese import. Probably responsible for the translocation of the substrate across the membrane. Essential for growth under Mn(2+)-limiting conditions. The polypeptide is Manganese import system permease protein ScaB (Streptococcus gordonii).